A 365-amino-acid polypeptide reads, in one-letter code: Serpentine receptor class epsilon-21 (365 aa).

Transmembrane regions (helical) follow at residues isoleucine 49 to isoleucine 69, isoleucine 82 to isoleucine 102, leucine 116 to leucine 136, valine 158 to leucine 178, isoleucine 189 to phenylalanine 209, valine 250 to leucine 270, and proline 292 to tyrosine 314.

This sequence belongs to the nematode receptor-like protein sre family.

Its subcellular location is the membrane. The sequence is that of Serpentine receptor class epsilon-21 (sre-21) from Caenorhabditis elegans.